Reading from the N-terminus, the 590-residue chain is ATP-dependent zinc metalloprotease FtsH 1 (590 aa).

At 1–8 (MLKLTKKQ) the chain is on the cytoplasmic side. A helical membrane pass occupies residues 9–29 (LIIVLGIAIVVVSAIGYAVYT). The Extracellular portion of the chain corresponds to 30 to 103 (QYFNEDKLEI…QVRETTDQYS (74 aa)). A helical transmembrane segment spans residues 104–124 (VVQVITFVVLIGGFIGVAIFL). The Cytoplasmic segment spans residues 125–590 (SKKNATQTSK…NEIFSGFQSM (466 aa)). 195–202 (GSPGTGKT) contacts ATP. Residue histidine 418 coordinates Zn(2+). Glutamate 419 is an active-site residue. 2 residues coordinate Zn(2+): histidine 422 and aspartate 496.

The protein in the central section; belongs to the AAA ATPase family. This sequence in the C-terminal section; belongs to the peptidase M41 family. In terms of assembly, homohexamer. Zn(2+) serves as cofactor.

Its subcellular location is the cell membrane. In terms of biological role, acts as a processive, ATP-dependent zinc metallopeptidase for both cytoplasmic and membrane proteins. Plays a role in the quality control of integral membrane proteins. The chain is ATP-dependent zinc metalloprotease FtsH 1 from Alkaliphilus metalliredigens (strain QYMF).